Reading from the N-terminus, the 616-residue chain is Chaperone protein HscA homolog (616 aa).

The protein belongs to the heat shock protein 70 family.

Chaperone involved in the maturation of iron-sulfur cluster-containing proteins. Has a low intrinsic ATPase activity which is markedly stimulated by HscB. This is Chaperone protein HscA homolog from Histophilus somni (strain 129Pt) (Haemophilus somnus).